Here is a 133-residue protein sequence, read N- to C-terminus: Osteocrin (133 aa).

Positions 1–27 are cleaved as a signal peptide; that stretch reads MLDWRLASAHFILAVTLTLWSSGKVLS. Arg-132 carries the post-translational modification Arginine amide.

This sequence belongs to the Osteocrin family. As to quaternary structure, interacts with NPR3. Enriched in neocortical regions of the developing cerebral cortex. Not expressed in other compartments of the neocortical wall or in brain regions such as the hippocampus, striatum, mediodorsal nucleus of the thalamus and cerebellum. Also expressed in bone. In developing neonatal rib bone, present at high level in osteoblasts on bone-forming surfaces, in newly incorporated osteocytes and in some late hypertrophic chondrocytes (at protein level). In adult bone, localizes specifically to osteoblasts and young osteocytes at bone-forming sites (at protein level).

The protein localises to the secreted. Functionally, hormone that acts as a regulator of dendritic growth in the developing cerebral cortex in response to sensory experience. Induced in the brain following membrane depolarization and inhibits dendritic branching in neurons of the developing cortex. Probably acts by binding to natriuretic peptide receptor NPR3/NPR-C, thereby preventing binding between NPR3/NPR-C and natriuretic peptides, leading to increase cGMP production. In Homo sapiens (Human), this protein is Osteocrin.